The sequence spans 457 residues: MTALDSRNWGLTPAMETGLFQKPQDRIFIIELENSIVSFINSNTESFQLRPMNSYYRLLSHQIAEYHNLNHVLARTQDSCVILFKGENFQKIEGKPLLQELQLNKKPEECASSSESIEKSNNNRIFRILKRKEVGNECDYKIDGNTRTPNSNLTANSNKDQKIEIDDKSSTDLEQERIEKERLYEQRKQEIFDKLNKSEDDVKSTNSSGSSDSDNEWSDWLNGDDSNTQTSNGSVSSSSPFNSSVTTIQVNKPQQQFYDSRRGRGGRRRGTNNYKDAYRGQSRRNKENGGYQSGYSSPYLVYPPPQMGGNSLPTYPLMYNPAGPAPGPAPSPMVMGNNTVFMNPYMYNMNPQGSCSFGTPIPMYPPYQYQYQYQYNTQYHSGPYSNTPSYNSNNYTRSSANKYHHFQGKNSYSGAIPKRSDDSNSNKNEGIRRASVEGSPSSRDTDSVEMKFDKLNI.

An R3H domain is found at 26–88 (RIFIIELENS…SCVILFKGEN (63 aa)). Disordered stretches follow at residues 142–181 (IDGN…IEKE), 195–291 (LNKS…NGGY), and 406–457 (FQGK…KLNI). Over residues 145 to 158 (NTRTPNSNLTANSN) the composition is skewed to polar residues. Residues 159 to 181 (KDQKIEIDDKSSTDLEQERIEKE) are compositionally biased toward basic and acidic residues. At serine 198 the chain carries Phosphoserine. Over residues 226-247 (SNTQTSNGSVSSSSPFNSSVTT) the composition is skewed to low complexity. The span at 248–258 (IQVNKPQQQFY) shows a compositional bias: polar residues. A compositionally biased stretch (basic and acidic residues) spans 418–435 (KRSDDSNSNKNEGIRRAS). Phosphoserine is present on residues serine 435, serine 439, and serine 447. The segment covering 443–457 (RDTDSVEMKFDKLNI) has biased composition (basic and acidic residues).

The protein localises to the cytoplasm. This chain is RNA-binding suppressor of PAS kinase protein 1 (RBS1), found in Saccharomyces cerevisiae (strain ATCC 204508 / S288c) (Baker's yeast).